The primary structure comprises 1340 residues: Pleckstrin homology domain-containing family G member 2 (1340 aa).

Residues 34 to 44 are compositionally biased toward polar residues; that stretch reads TPTAQAATTMA. Residues 34–76 are disordered; the sequence is TPTAQAATTMASPRGSGSSTSLSTVGSEGDPSPACSASRPEPL. Over residues 45–62 the composition is skewed to low complexity; it reads SPRGSGSSTSLSTVGSEG. The 182-residue stretch at 98 to 279 folds into the DH domain; sequence RLERVAREIV…TAVAWYINDM (182 aa). A PH domain is found at 309–407; the sequence is ELVLEGTFRG…WIHCLQRLFF (99 aa). Disordered stretches follow at residues 431 to 623, 684 to 743, 820 to 855, 907 to 979, 991 to 1028, 1047 to 1069, and 1125 to 1146; these read PKSK…IPCI, LPGP…SVQG, MQRA…EAEP, NVSD…PSAG, TTSL…EQRD, PVCT…STDF, and PLSS…SLTD. Thr441 carries the phosphothreonine modification. Ser446 and Ser465 each carry phosphoserine. Residues 560 to 572 show a composition bias toward basic and acidic residues; sequence DIPKFPRDSRVPV. Over residues 588–600 the composition is skewed to acidic residues; sequence SEEEEEEDLETDE. Polar residues-rich tracts occupy residues 703 to 714, 820 to 831, 907 to 921, 930 to 945, and 956 to 972; these read SGSNPGRLSESP, MQRAETRASTNA, NVSD…SSNS, GQSN…TSLL, and PTAS…SQVP. Residues 1049–1059 show a composition bias toward polar residues; the sequence is CTSSPDQQIPA. Thr1215 bears the Phosphothreonine mark. Ser1219 and Ser1269 each carry phosphoserine. The tract at residues 1250 to 1340 is disordered; the sequence is RRQGPGGEGT…VGPSQGPGGS (91 aa). Over residues 1276 to 1288 the composition is skewed to pro residues; that stretch reads PSPPPQPQPPAPP. Residues 1319–1333 are compositionally biased toward low complexity; the sequence is HPALLAAPHPGAVGP.

In terms of tissue distribution, expressed in thymus, skeletal muscle, lung, testis, uterus, pancreas and heart and also expressed during embryogenesis.

Its function is as follows. May be a transforming oncogene with exchange activity for CDC42. May be a guanine-nucleotide exchange factor (GEF) for RAC1 and CDC42. Activated by the binding to subunits beta and gamma of the heterotrimeric guanine nucleotide-binding protein (G protein). Involved in the regulation of actin polymerization. This is Pleckstrin homology domain-containing family G member 2 (Plekhg2) from Mus musculus (Mouse).